Reading from the N-terminus, the 657-residue chain is Glycogen debranching enzyme (657 aa).

D336 serves as the catalytic Nucleophile. E371 (proton donor) is an active-site residue. Positions 458–467 (NEANGEENRD) are enriched in basic and acidic residues. The interval 458–479 (NEANGEENRDGTNNNYSNNHGK) is disordered.

This sequence belongs to the glycosyl hydrolase 13 family.

It carries out the reaction Hydrolysis of (1-&gt;6)-alpha-D-glucosidic linkages to branches with degrees of polymerization of three or four glucose residues in limit dextrin.. The protein operates within glycan degradation; glycogen degradation. Removes maltotriose and maltotetraose chains that are attached by 1,6-alpha-linkage to the limit dextrin main chain, generating a debranched limit dextrin. In Shigella boydii serotype 18 (strain CDC 3083-94 / BS512), this protein is Glycogen debranching enzyme.